Reading from the N-terminus, the 279-residue chain is 3-methyl-2-oxobutanoate hydroxymethyltransferase (279 aa).

Positions 43 and 82 each coordinate Mg(2+). 3-methyl-2-oxobutanoate is bound by residues 43–44, aspartate 82, and lysine 112; that span reads DS. Residue glutamate 114 coordinates Mg(2+). Glutamate 181 acts as the Proton acceptor in catalysis.

It belongs to the PanB family. As to quaternary structure, homodecamer; pentamer of dimers. Requires Mg(2+) as cofactor.

It localises to the cytoplasm. It carries out the reaction 3-methyl-2-oxobutanoate + (6R)-5,10-methylene-5,6,7,8-tetrahydrofolate + H2O = 2-dehydropantoate + (6S)-5,6,7,8-tetrahydrofolate. It participates in cofactor biosynthesis; (R)-pantothenate biosynthesis; (R)-pantoate from 3-methyl-2-oxobutanoate: step 1/2. In terms of biological role, catalyzes the reversible reaction in which hydroxymethyl group from 5,10-methylenetetrahydrofolate is transferred onto alpha-ketoisovalerate to form ketopantoate. This is 3-methyl-2-oxobutanoate hydroxymethyltransferase from Exiguobacterium sibiricum (strain DSM 17290 / CCUG 55495 / CIP 109462 / JCM 13490 / 255-15).